A 764-amino-acid chain; its full sequence is 5-methyltetrahydropteroyltriglutamate--homocysteine methyltransferase (764 aa).

Residues 16-19 (RELK) and Lys-117 contribute to the 5-methyltetrahydropteroyltri-L-glutamate site. Residues 442–444 (IGS) and Glu-495 contribute to the L-homocysteine site. L-methionine is bound by residues 442-444 (IGS) and Glu-495. Residues 526–527 (RC) and Trp-572 each bind 5-methyltetrahydropteroyltri-L-glutamate. Asp-610 is a binding site for L-homocysteine. Residue Asp-610 coordinates L-methionine. Glu-616 serves as a coordination point for 5-methyltetrahydropteroyltri-L-glutamate. Positions 652, 654, and 676 each coordinate Zn(2+). His-705 serves as the catalytic Proton donor. Cys-737 is a binding site for Zn(2+).

The protein belongs to the vitamin-B12 independent methionine synthase family. The cofactor is Zn(2+).

The enzyme catalyses 5-methyltetrahydropteroyltri-L-glutamate + L-homocysteine = tetrahydropteroyltri-L-glutamate + L-methionine. Its pathway is amino-acid biosynthesis; L-methionine biosynthesis via de novo pathway; L-methionine from L-homocysteine (MetE route): step 1/1. In terms of biological role, catalyzes the transfer of a methyl group from 5-methyltetrahydrofolate to homocysteine resulting in methionine formation. The chain is 5-methyltetrahydropteroyltriglutamate--homocysteine methyltransferase from Bordetella bronchiseptica (strain ATCC BAA-588 / NCTC 13252 / RB50) (Alcaligenes bronchisepticus).